The chain runs to 288 residues: UPF0761 membrane protein HSM_1104 (288 aa).

Transmembrane regions (helical) follow at residues 36–56, 92–112, 127–147, 176–196, 200–220, and 240–260; these read TLALVPLIMVFFSVFAAFPVF, QMSAVGIISLIVVALMLIHSI, PAIFSFAIYWLILTLGPIVIA, LLSLMPFFLTWFIFTVLYMVV, KVSIIHSAAGALIAAVFFTLG, and AMATLPIMLLWIQLSWTAVLL.

This sequence belongs to the UPF0761 family.

The protein resides in the cell inner membrane. The chain is UPF0761 membrane protein HSM_1104 from Histophilus somni (strain 2336) (Haemophilus somnus).